The primary structure comprises 120 residues: Spermidine export protein MdtJ (120 aa).

4 consecutive transmembrane segments (helical) span residues 1–21, 31–51, 54–74, and 81–101; these read MFYW…TLSM, AGFI…SFAV, IALG…ITIF, and EALS…IVLI.

The protein belongs to the drug/metabolite transporter (DMT) superfamily. Small multidrug resistance (SMR) (TC 2.A.7.1) family. MdtJ subfamily. As to quaternary structure, forms a complex with MdtI.

The protein resides in the cell inner membrane. In terms of biological role, catalyzes the excretion of spermidine. In Salmonella paratyphi A (strain ATCC 9150 / SARB42), this protein is Spermidine export protein MdtJ.